The following is a 153-amino-acid chain: Ribosome maturation factor RimP (153 aa).

Belongs to the RimP family.

Its subcellular location is the cytoplasm. Its function is as follows. Required for maturation of 30S ribosomal subunits. The protein is Ribosome maturation factor RimP of Clostridium botulinum (strain Loch Maree / Type A3).